A 102-amino-acid chain; its full sequence is MKRMIRSHGRKTECQMTSAGERRGSAVGAPICGSGTRRGSGANERRDSDVGPIAHSSGTRRGSANETSACTRTDHQKADIGLWFMFLVFGLCSWLAMRYRAQ.

The disordered stretch occupies residues 1 to 71; that stretch reads MKRMIRSHGR…GSANETSACT (71 aa). The Extracellular segment spans residues 1–79; that stretch reads MKRMIRSHGR…CTRTDHQKAD (79 aa). Polar residues predominate over residues 56–71; sequence SSGTRRGSANETSACT. A glycan (N-linked (GlcNAc...) asparagine; by host) is linked at Asn-65. The helical transmembrane segment at 80 to 97 threads the bilayer; sequence IGLWFMFLVFGLCSWLAM. The Cytoplasmic segment spans residues 98 to 102; it reads RYRAQ.

Belongs to the HHV-5 UL15A protein family.

Its subcellular location is the host membrane. This is an uncharacterized protein from Human cytomegalovirus (strain AD169) (HHV-5).